The following is a 356-amino-acid chain: sn-glycerol-3-phosphate import ATP-binding protein UgpC (356 aa).

The region spanning 4–235 is the ABC transporter domain; that stretch reads LKLQAVTKSW…PASLFVASFI (232 aa). ATP is bound at residue 37–44; that stretch reads GPSGCGKS.

The protein belongs to the ABC transporter superfamily. sn-glycerol-3-phosphate importer (TC 3.A.1.1.3) family. In terms of assembly, the complex is composed of two ATP-binding proteins (UgpC), two transmembrane proteins (UgpA and UgpE) and a solute-binding protein (UgpB).

It is found in the cell inner membrane. The enzyme catalyses sn-glycerol 3-phosphate(out) + ATP + H2O = sn-glycerol 3-phosphate(in) + ADP + phosphate + H(+). In terms of biological role, part of the ABC transporter complex UgpBAEC involved in sn-glycerol-3-phosphate (G3P) import. Responsible for energy coupling to the transport system. The polypeptide is sn-glycerol-3-phosphate import ATP-binding protein UgpC (Shigella sonnei (strain Ss046)).